Consider the following 384-residue polypeptide: Histone acetyltransferase type B subunit 2 (384 aa).

WD repeat units follow at residues 156-196 (GHSA…SSIS), 203-243 (RHET…CIHA), 247-287 (AHTS…QPLH), 291-331 (GHSK…AEVP), and 348-384 (GHTS…PQPE).

The protein belongs to the WD repeat RBAP46/RBAP48/MSI1 family. Component of the HAT-B complex.

It is found in the cytoplasm. It localises to the nucleus. Its function is as follows. Regulatory subunit of the histone acetylase B (HAT-B) complex. The complex acetylates histone H4 which is required for telomeric silencing. This Encephalitozoon cuniculi (strain GB-M1) (Microsporidian parasite) protein is Histone acetyltransferase type B subunit 2 (HAT2).